The sequence spans 922 residues: NEDD4-like E3 ubiquitin-protein ligase WWP1 (922 aa).

The region spanning 1–116 is the C2 domain; sequence MATASPRSDT…IHNRKLERVK (116 aa). 5 stretches are compositionally biased toward polar residues: residues 210 to 219, 243 to 278, 286 to 302, 314 to 323, and 340 to 351; these read GDNTPSSPSQ, NGESSSFAPTDNASVTGTPVVSEENALSPNCTSTTV, ILTSSENNECIPSTSAE, DTSNSRSSSA, and RQQSGNANTETL. The disordered stretch occupies residues 210–388; sequence GDNTPSSPSQ…RPQPLPPGWE (179 aa). 4 consecutive WW domains span residues 349–382, 381–414, 456–489, and 496–529; these read ETLPSGWEQRKDPHGRTYYVDHNTRTTTWERPQP, QPLPPGWERRVDDRRRVYYVDHNTRTTTWQRPTM, GPLPPGWEKRVDSTDRVYFVNHNTKTTQWEDPRT, and EPLPEGWEIRYTREGVRYFVDHNTRTTTFKDPRN. Residues 349-531 are required for interaction with and ubiquitination of AMOTL2. Required for interaction with YAP1; the sequence is ETLPSGWEQR…TTFKDPRNGK (183 aa). The HECT domain maps to 588 to 922; the sequence is KPYDLRRRLY…IEETEGFGQE (335 aa). Cysteine 890 functions as the Glycyl thioester intermediate in the catalytic mechanism.

As to quaternary structure, interacts with the Crumbs complex components PALS1 and PATJ; interaction with the Crumbs complex is enhanced by WWP1's interaction with AMOTL2 and facilitates WWP1 localization to the plasma membrane. Interaction with the Crumbs complex promotes WWP1 monoubiquitination of AMOTL2, which activates the Hippo signaling pathway. Binds KLF2 and HIVEP3. Binds SCNN1A, SCNN1B, SCNN1G, WBP1, WBP2, DRPLA and adenovirus type 2 PIII. Interacts with RNF11. Interacts with SPART. Interacts with ERBB4 isoforms JM-B CYT-1 and JM-A CYT-1. Interacts with SMAD1, SMAD2, SMAD3, SMAD5, SMAD6, SMAD7, TGFBR1 and TGFBR2. Associates with the TGFBR1:TGFBR2 receptor complex in presence of SMAD7. Interacts with SKIL isoform 1. Interacts with TP63 isoform 1 and isoform 2. Interacts with STAMBP and RNF11. Interacts with NDFIP1 and NDFIP2; this interaction activates the E3 ubiquitin-protein ligase. Interacts with TGIF. Interacts (via WW domains) with ARRDC1, ARRDC2 and ARRDC3. (Microbial infection) Interacts with HTLV-1 protein Gag. In terms of assembly, (Microbial infection) Interacts with ebola virus protein VP40. Auto-ubiquitinated and ubiquitinated by RNF11. In terms of tissue distribution, detected in heart, placenta, pancreas, kidney, liver, skeletal muscle, bone marrow, fetal brain, and at much lower levels in adult brain and lung. Isoform 1 and isoform 5 predominate in all tissues tested, except in testis and bone marrow, where isoform 5 is expressed at much higher levels than isoform 1.

The protein localises to the cytoplasm. It is found in the cell membrane. Its subcellular location is the nucleus. It localises to the cell junction. It carries out the reaction S-ubiquitinyl-[E2 ubiquitin-conjugating enzyme]-L-cysteine + [acceptor protein]-L-lysine = [E2 ubiquitin-conjugating enzyme]-L-cysteine + N(6)-ubiquitinyl-[acceptor protein]-L-lysine.. It functions in the pathway protein modification; protein ubiquitination. Activated by NDFIP1- and NDFIP2-binding. E3 ubiquitin-protein ligase which accepts ubiquitin from an E2 ubiquitin-conjugating enzyme in the form of a thioester and then directly transfers the ubiquitin to targeted substrates. Ubiquitinates ERBB4 isoforms JM-A CYT-1 and JM-B CYT-1, KLF2, KLF5 and TP63 and promotes their proteasomal degradation. Ubiquitinates RNF11 without targeting it for degradation. Ubiquitinates and promotes degradation of TGFBR1; the ubiquitination is enhanced by SMAD7. Ubiquitinates SMAD6 and SMAD7. Ubiquitinates and promotes degradation of SMAD2 in response to TGF-beta signaling, which requires interaction with TGIF. Activates the Hippo signaling pathway in response to cell contact inhibition and recruitment to the Crumbs complex at the cell membrane. Monoubiquitinates AMOTL2 which facilitates its interaction with and activation of LATS2. LATS2 then phosphorylates YAP1, excluding it from the nucleus and therefore ultimately represses YAP1-driven transcription of target genes. The sequence is that of NEDD4-like E3 ubiquitin-protein ligase WWP1 (WWP1) from Homo sapiens (Human).